The following is a 929-amino-acid chain: Isoleucine--tRNA ligase (929 aa).

Residues Pro-58–His-68 carry the 'HIGH' region motif. Residue Glu-563 participates in L-isoleucyl-5'-AMP binding. The 'KMSKS' region signature appears at Lys-605–Ser-609. Lys-608 serves as a coordination point for ATP. Residues Cys-892, Cys-895, Cys-912, and Cys-915 each coordinate Zn(2+).

This sequence belongs to the class-I aminoacyl-tRNA synthetase family. IleS type 1 subfamily. As to quaternary structure, monomer. Zn(2+) serves as cofactor.

It is found in the cytoplasm. It carries out the reaction tRNA(Ile) + L-isoleucine + ATP = L-isoleucyl-tRNA(Ile) + AMP + diphosphate. Its function is as follows. Catalyzes the attachment of isoleucine to tRNA(Ile). As IleRS can inadvertently accommodate and process structurally similar amino acids such as valine, to avoid such errors it has two additional distinct tRNA(Ile)-dependent editing activities. One activity is designated as 'pretransfer' editing and involves the hydrolysis of activated Val-AMP. The other activity is designated 'posttransfer' editing and involves deacylation of mischarged Val-tRNA(Ile). This is Isoleucine--tRNA ligase from Neisseria gonorrhoeae (strain ATCC 700825 / FA 1090).